We begin with the raw amino-acid sequence, 150 residues long: Lipoprotein signal peptidase (150 aa).

Transmembrane regions (helical) follow at residues 5–25, 59–79, and 82–102; these read LSLV…NWVV, QQWF…WFLW, and MGQN…LGNF. Active-site residues include D113 and D129. The chain crosses the membrane as a helical span at residues 124-144; the sequence is IFNIADILLSVGFVVLFIAIL.

It belongs to the peptidase A8 family.

It localises to the cell membrane. The catalysed reaction is Release of signal peptides from bacterial membrane prolipoproteins. Hydrolyzes -Xaa-Yaa-Zaa-|-(S,diacylglyceryl)Cys-, in which Xaa is hydrophobic (preferably Leu), and Yaa (Ala or Ser) and Zaa (Gly or Ala) have small, neutral side chains.. The protein operates within protein modification; lipoprotein biosynthesis (signal peptide cleavage). In terms of biological role, this protein specifically catalyzes the removal of signal peptides from prolipoproteins. This Lactococcus lactis subsp. cremoris (strain SK11) protein is Lipoprotein signal peptidase.